The following is a 90-amino-acid chain: Kunitz-type serine protease inhibitor bitisilin-2 (90 aa).

Residues 1-24 (MSSGGLLLLLGLLTLWAELTPVSG) form the signal peptide. The BPTI/Kunitz inhibitor domain maps to 31 to 81 (CYLPADTGPCMANFPRFYYDSASKKCKKFTYGGCHGNANNFETREECRKKC). 3 disulfides stabilise this stretch: cysteine 31/cysteine 81, cysteine 40/cysteine 64, and cysteine 56/cysteine 77.

It belongs to the venom Kunitz-type family. As to expression, expressed by the venom gland.

The protein resides in the secreted. Serine protease inhibitor. The sequence is that of Kunitz-type serine protease inhibitor bitisilin-2 from Bitis gabonica (Gaboon adder).